The following is a 369-amino-acid chain: Chaperone protein DnaJ (369 aa).

The J domain occupies 5–69 (DYYDVLGISK…NKKAQYDRFG (65 aa)). The segment at 131–213 (GTTKNVSVDI…CSGAGRVKAK (83 aa)) adopts a CR-type zinc-finger fold. Zn(2+) contacts are provided by Cys-144, Cys-147, Cys-161, Cys-164, Cys-187, Cys-190, Cys-201, and Cys-204. 4 CXXCXGXG motif repeats span residues 144–151 (CGHCHGSG), 161–168 (CSKCHGQG), 187–194 (CPQCQGEG), and 201–208 (CHVCSGAG).

It belongs to the DnaJ family. In terms of assembly, homodimer. It depends on Zn(2+) as a cofactor.

Its subcellular location is the cytoplasm. In terms of biological role, participates actively in the response to hyperosmotic and heat shock by preventing the aggregation of stress-denatured proteins and by disaggregating proteins, also in an autonomous, DnaK-independent fashion. Unfolded proteins bind initially to DnaJ; upon interaction with the DnaJ-bound protein, DnaK hydrolyzes its bound ATP, resulting in the formation of a stable complex. GrpE releases ADP from DnaK; ATP binding to DnaK triggers the release of the substrate protein, thus completing the reaction cycle. Several rounds of ATP-dependent interactions between DnaJ, DnaK and GrpE are required for fully efficient folding. Also involved, together with DnaK and GrpE, in the DNA replication of plasmids through activation of initiation proteins. In Acholeplasma laidlawii, this protein is Chaperone protein DnaJ.